We begin with the raw amino-acid sequence, 222 residues long: Physcion biosynthesis cluster O-methyltransferase (222 aa).

This sequence belongs to the methyltransferase superfamily.

The catalysed reaction is emodin + S-adenosyl-L-methionine = physcion + S-adenosyl-L-homocysteine. The protein operates within secondary metabolite biosynthesis. Its function is as follows. O-methyltransferase; part of the gene cluster that mediates the biosynthesis of physcion, a natural anthraquinone fungicide that can prevent plant fungal infections. Within the pathway, the O-methyltransferase AcOMT catalyzes the last step by transferring a methyl group to C-6 hydroxyl of emodin to form physcion. AcOMT may also methylate the C-6 hydroxyl group of emodin anthrone to produce physcion-anthrone B. The pathway begins with the polyketide synthase AcPKS that condenses 8 malonyl-CoA units to synthesize atrochrysone thioester which is released from the synthase by the atrochrysone carboxyl ACP thioesterase AcTE that breaks the thioester bond and leads to free atrochrysone carboxylic acid. Spontaneous decarboxylation of atrochrysone carboxylic acid leads to the formation of atrochrysone. Then, atrochrysone undergoes spontaneous dehydration and oxidation, giving the products emodin anthrone and emodin. The O-methyltransferase AcOMT then methylates the C-6 hydroxyl of emodin to form physcion. This Aspergillus chevalieri (Eurotium chevalieri) protein is Physcion biosynthesis cluster O-methyltransferase.